The chain runs to 115 residues: Ig kappa chain V region 3315 (115 aa).

A framework-1 region spans residues 1 to 24; that stretch reads AQIVMTQTPSSVSAAVGGTVTINC. The interval 25 to 37 is complementarity-determining-1; it reads QSSQSVYENGRLS. The tract at residues 38–52 is framework-2; sequence WFQQKPGQPPKRLIY. The interval 53 to 59 is complementarity-determining-2; sequence RASTLAS. Residues 60-91 are framework-3; the sequence is GVSSRFTGSGSGTQFTLSISDVQCDDAATYYC. The interval 92 to 104 is complementarity-determining-3; it reads LGNYDCSSGDSFT. The interval 105–114 is framework-4; it reads FGGGTEVVVK.

This chain is Ig kappa chain V region 3315, found in Oryctolagus cuniculus (Rabbit).